The primary structure comprises 131 residues: Bacteriohemerythrin (131 aa).

8 residues coordinate Fe cation: H20, E23, H56, E60, H75, H79, H117, and D122.

This sequence belongs to the hemerythrin family. In terms of assembly, monomer.

Its function is as follows. Oxygen-binding protein. May be involved in a storage mechanism or for delivery to oxygen-requiring enzymes. The oxygen-binding site contains two iron atoms. This chain is Bacteriohemerythrin, found in Aquifex aeolicus (strain VF5).